Here is a 292-residue protein sequence, read N- to C-terminus: MDLPRLYVPATLANLGSGFDALGVALDLYLEVEAHPAPEDAFLYEGEGHVEGTDNLIHEGYRAGMRALGLEPFPLRVRAFNPIPLARGMGSSSAALVAGVALADRLSGGRLGREGVFRVAAGLEGHPDNVAPAVYGGFVAALSDPPLAIPLPRPEGVRFVLAVPPYEVPTPLAREALPREVPLEDAIYNLARSALWPAALSSGRLEALREACRDRLHQPHRAHLMPGVLEAIEGALEAGALAAFVGGAGPTLAALARAGEEAPVIRALSAYRGPEGRTLVLGIGEGYFWKET.

ATP is bound at residue 84 to 94 (PLARGMGSSSA).

Belongs to the GHMP kinase family. Homoserine kinase subfamily.

The protein resides in the cytoplasm. The catalysed reaction is L-homoserine + ATP = O-phospho-L-homoserine + ADP + H(+). It participates in amino-acid biosynthesis; L-threonine biosynthesis; L-threonine from L-aspartate: step 4/5. Functionally, catalyzes the ATP-dependent phosphorylation of L-homoserine to L-homoserine phosphate. The sequence is that of Homoserine kinase from Thermus thermophilus (strain ATCC 27634 / DSM 579 / HB8).